The following is a 162-amino-acid chain: Precursor protein UG (162 aa).

Residues 1–19 (MERILLCFIVATLVAISMA) form the signal peptide. A propeptide spanning residues 20–23 (NPRP) is cleaved from the precursor. Disulfide bonds link C30-C42 and C33-C49. Positions 56 to 59 (VPKP) are excised as a propeptide. 2 disulfide bridges follow: C66–C78 and C69–C85. Positions 92-95 (VPKP) are excised as a propeptide. 2 cysteine pairs are disulfide-bonded: C102–C114 and C105–C121. The propeptide occupies 128–131 (VPKP). 2 disulfides stabilise this stretch: C138-C150 and C141-C157.

This sequence belongs to the sea anemone BBH family.

The protein localises to the secreted. It localises to the nematocyst. Functionally, affects the ASIC3 channel (ACCN3) and produces analgesic effects. It produces a reversible inhibition effect on both the transient and the sustained current of human ASIC3 channels expressed in X.laevis oocytes. It completely blocks the transient component (IC(50)=10 uM) and partially (48%) inhibits the amplitude of the sustained component (IC(50)=1.44 uM). Using in vivo tests in mice, it reverses inflammatory and acid-induced pain. Its function is as follows. Does not affect the ASIC3 channel. Does not cause lethality or paralysis of noble crayfish (A.astacus) at a dose of 1 mg/kg. The protein is Precursor protein UG of Urticina grebelnyi (Painted anemone).